The sequence spans 101 residues: Small ribosomal subunit protein uS14 (101 aa).

This sequence belongs to the universal ribosomal protein uS14 family. As to quaternary structure, part of the 30S ribosomal subunit. Contacts proteins S3 and S10.

In terms of biological role, binds 16S rRNA, required for the assembly of 30S particles and may also be responsible for determining the conformation of the 16S rRNA at the A site. This chain is Small ribosomal subunit protein uS14, found in Maricaulis maris (strain MCS10) (Caulobacter maris).